The chain runs to 554 residues: Guanine nucleotide-binding protein alpha-2 subunit (554 aa).

Disordered stretches follow at residues 1–139 (MGLC…NNSN) and 157–183 (VNGN…THSG). Gly2 is lipidated: N-myristoyl glycine. Cys4 carries S-palmitoyl cysteine lipidation. Basic and acidic residues-rich tracts occupy residues 7–17 (KDSRESTHDGG) and 28–43 (ANRR…DKKQ). The segment covering 52–66 (GSIVNAASNINNSSS) has biased composition (low complexity). Polar residues predominate over residues 67 to 85 (GKTKISTVSEDGTVSNGVG). Residues 91–139 (DNANNKNNGNNNNSNNNDNNNNNNNNIGNNINGNNNNDSENIHDSNNSN) are compositionally biased toward low complexity. The G-alpha domain occupies 228 to 554 (NALKVLLLGS…ENSLKDSGVL (327 aa)). Positions 231 to 244 (KVLLLGSGESGKST) are G1 motif. GTP-binding residues include Glu239, Ser240, Gly241, Lys242, Ser243, Thr244, Asp351, Ile376, Thr382, Gly405, Asn471, Lys472, Asp474, and Ala526. Ser243 contributes to the Mg(2+) binding site. Residues 374–382 (DVIRTRKKT) form a G2 motif region. Mg(2+) is bound at residue Thr382. The tract at residues 398-407 (LHFFDVGGQR) is G3 motif. The tract at residues 467–474 (VLFLNKID) is G4 motif. The tract at residues 524 to 529 (TQATDT) is G5 motif.

This sequence belongs to the G-alpha family. As to quaternary structure, g proteins are composed of 3 units; alpha, beta and gamma. The alpha chain contains the guanine nucleotide binding site. Mg(2+) serves as cofactor.

In terms of biological role, guanine nucleotide-binding proteins (G proteins) are involved as modulators or transducers in various transmembrane signaling systems. This protein may be involved in the determination of the cAMP level according to nutritional conditions, most probably as a regulator of adenylyl cyclase. This Kluyveromyces lactis (strain ATCC 8585 / CBS 2359 / DSM 70799 / NBRC 1267 / NRRL Y-1140 / WM37) (Yeast) protein is Guanine nucleotide-binding protein alpha-2 subunit (GPA2).